The primary structure comprises 416 residues: cAMP-dependent protein kinase type II-beta regulatory subunit (416 aa).

The segment at 2 to 151 (SIEIPAGLTE…RLQEACKDIL (150 aa)) is dimerization and phosphorylation. The interval 53 to 97 (HEGRTWGDAGAAAGGGTPSKGVNFAEEPMRSDSENGEEEEAAEAG) is disordered. At Thr69 the chain carries Phosphothreonine. 3 positions are modified to phosphoserine: Ser83, Ser85, and Ser112. 3',5'-cyclic AMP contacts are provided by residues 152 to 273 (LFKN…ESLP), Glu221, Arg230, 274 to 416 (FLKS…EPTA), Glu350, and Arg359.

This sequence belongs to the cAMP-dependent kinase regulatory chain family. As to quaternary structure, the inactive form of the enzyme is composed of two regulatory chains and two catalytic chains. Activation by cAMP produces two active catalytic monomers and a regulatory dimer that binds four cAMP molecules. Interacts with PRKACA and PRKACB. Interacts with the phosphorylated form of PJA2. Forms a complex composed of PRKAR2B, GSK3B and GSKIP through GSKIP interaction; facilitates PKA-induced phosphorylation and regulates GSK3B activity. In terms of processing, phosphorylated by the activated catalytic chain. In terms of tissue distribution, four types of regulatory chains are found: I-alpha, I-beta, II-alpha, and II-beta. Their expression varies among tissues and is in some cases constitutive and in others inducible. Brain. Present in a few pyramidal neurons and mostly in mossy fibers. Colocalizes with PJA2 in dentate granule cells and at postsynaptic sites of primary hippocampal neurons.

The protein resides in the cytoplasm. The protein localises to the cell membrane. In terms of biological role, regulatory subunit of the cAMP-dependent protein kinases involved in cAMP signaling in cells. Type II regulatory chains mediate membrane association by binding to anchoring proteins, including the MAP2 kinase. The protein is cAMP-dependent protein kinase type II-beta regulatory subunit (Prkar2b) of Rattus norvegicus (Rat).